The following is a 518-amino-acid chain: Membrane-bound lytic murein transglycosylase F (518 aa).

Residues 1 to 21 form the signal peptide; it reads MKKLKINYLFIGILALLLAVA. The non-LT domain stretch occupies residues 22–269; it reads LWPSIPWFGK…RIEEKYLGHG (248 aa). The tract at residues 270–518 is LT domain; that stretch reads DDFDYVDTRT…SRKGSEEKQN (249 aa). Glu-314 is an active-site residue.

This sequence in the N-terminal section; belongs to the bacterial solute-binding protein 3 family. The protein in the C-terminal section; belongs to the transglycosylase Slt family.

It localises to the cell outer membrane. It catalyses the reaction Exolytic cleavage of the (1-&gt;4)-beta-glycosidic linkage between N-acetylmuramic acid (MurNAc) and N-acetylglucosamine (GlcNAc) residues in peptidoglycan, from either the reducing or the non-reducing ends of the peptidoglycan chains, with concomitant formation of a 1,6-anhydrobond in the MurNAc residue.. Murein-degrading enzyme that degrades murein glycan strands and insoluble, high-molecular weight murein sacculi, with the concomitant formation of a 1,6-anhydromuramoyl product. Lytic transglycosylases (LTs) play an integral role in the metabolism of the peptidoglycan (PG) sacculus. Their lytic action creates space within the PG sacculus to allow for its expansion as well as for the insertion of various structures such as secretion systems and flagella. This is Membrane-bound lytic murein transglycosylase F from Shigella boydii serotype 18 (strain CDC 3083-94 / BS512).